A 910-amino-acid polypeptide reads, in one-letter code: Staphylococcal nuclease domain-containing protein 1 (910 aa).

Ala2 is modified (N-acetylalanine). TNase-like domains follow at residues 18–166 (TVQR…MWSE), 193–328 (KPVN…IWRD), and 341–496 (KQFV…LHSK). At Thr103 the chain carries Phosphothreonine. N6-acetyllysine is present on Lys193. Thr240 bears the Phosphothreonine mark. 2 short sequence motifs (nuclear localization signal) span residues 321-325 (RRLRI) and 388-392 (KKLRP). Phosphoserine is present on Ser426. A Glycyl lysine isopeptide (Lys-Gly) (interchain with G-Cter in SUMO2) cross-link involves residue Lys513. The TNase-like 4 domain occupies 525-660 (GRSEAVVEYV…KQKKEKVWAH (136 aa)). Position 641 is an N6-acetyllysine (Lys641). At Ser645 the chain carries Phosphoserine. In terms of domain architecture, Tudor spans 729–787 (APRRGEFCIAKFVDGEWYRARVEKVESPAKVHVFYIDYGNREILPSTRLGTLPPAFSTR). Thr779 carries the post-translational modification Phosphothreonine. 2 positions are modified to phosphoserine: Ser785 and Ser909.

In terms of assembly, forms a ternary complex with STAT6 and POLR2A. Associates with the RNA-induced silencing complex (RISC). Interacts with the RISC components AGO2, FMR1 and TNRC6A. Interacts with GTF2E1 and GTF2E2. Interacts with PIM1. Interacts with STAT5. Interacts with SYT11 (via C2 2 domain); the interaction with SYT11 is direct. Post-translationally, phosphorylated by PIM1 in vitro. In terms of tissue distribution, in lactating cows highly expressed in mammary epithelial cells.

It localises to the cytoplasm. The protein resides in the nucleus. Its subcellular location is the melanosome. It carries out the reaction Endonucleolytic cleavage to nucleoside 3'-phosphates and 3'-phosphooligonucleotide end-products.. Functionally, endonuclease that mediates miRNA decay of both protein-free and AGO2-loaded miRNAs. As part of its function in miRNA decay, regulates mRNAs involved in G1-to-S phase transition. Functions as a bridging factor between STAT6 and the basal transcription factor. Plays a role in PIM1 regulation of MYB activity. Functions as a transcriptional coactivator for STAT5. In Bos taurus (Bovine), this protein is Staphylococcal nuclease domain-containing protein 1 (SND1).